The sequence spans 499 residues: Endoglucanase (499 aa).

Residues 1-29 (MKRSISIFITCLLIAVLTMGGLLPSPASA) form the signal peptide. Substrate is bound by residues His65, 69 to 70 (WY), Tyr96, and His131. The active-site Proton donor is Glu169. Tyr231 is a binding site for substrate. Glu257 serves as the catalytic Nucleophile. Substrate-binding positions include 263–264 (AS), Trp291, and 296–298 (KQE). A compositionally biased stretch (basic and acidic residues) spans 330-340 (RGTKDSTKDVP). Residues 330-353 (RGTKDSTKDVPETPAQDNPTQEKG) are disordered. In terms of domain architecture, CBM3 spans 350 to 499 (QEKGVSVQYK…GKLIWGTEPN (150 aa)).

This sequence belongs to the glycosyl hydrolase 5 (cellulase A) family.

It catalyses the reaction Endohydrolysis of (1-&gt;4)-beta-D-glucosidic linkages in cellulose, lichenin and cereal beta-D-glucans.. This Bacillus subtilis protein is Endoglucanase (bglC).